The sequence spans 271 residues: GPN-loop GTPase 3 (271 aa).

GTP is bound at residue 13-18 (GAGKST). The short motif at 70–72 (GPN) is the Gly-Pro-Asn (GPN)-loop; involved in dimer interface element. Position 173-176 (173-176 (SKLD)) interacts with GTP.

It belongs to the GPN-loop GTPase family. Heterodimers with GPN1 or GPN2. Binds to RNA polymerase II (RNAPII).

Small GTPase required for proper nuclear import of RNA polymerase II and III (RNAPII and RNAPIII). May act at an RNAP assembly step prior to nuclear import. This chain is GPN-loop GTPase 3, found in Kluyveromyces lactis (strain ATCC 8585 / CBS 2359 / DSM 70799 / NBRC 1267 / NRRL Y-1140 / WM37) (Yeast).